The sequence spans 396 residues: MKILVLNSGSSSIKFKFFDNKIIKASGLVEKIGEQNSKVILKNVLNNESFERELTINNHEEGLSIVNELFKESGILADLNTLDGCGHRIVHGGRNLSEHCLVDDYVLKEIDRVSIFAPLHNPAHLAGIKTMIKAAPSVANVAIFDTAFHRTMPDFAYMYALPYDFYDKHNIRRYGFHGTSHAFVSSRAASLLEKDKSELNVISAHLGNGASVCAIEKGKSVDTSMGFTPLEGLVMGTRCGDLDPAILPFISHLKGLTIEEIDTLMNKKSGVYGICGYNDFRDIEREIEQGNDKARLALDMFCYRLVKYIGAYFAVLPKTDAIVFTGGIGENDSLVRQKVCERLAHLGIELDFELNKQRISGERMINHANSKVKVLVIPTDEELEIARITEELIGKN.

Residue N7 participates in Mg(2+) binding. K14 provides a ligand contact to ATP. Residue R88 participates in substrate binding. D145 serves as the catalytic Proton donor/acceptor. Residues 205–209, 279–281, and 327–331 each bind ATP; these read HLGNG, DFR, and GIGEN. E381 lines the Mg(2+) pocket.

It belongs to the acetokinase family. Homodimer. The cofactor is Mg(2+). Requires Mn(2+) as cofactor.

It is found in the cytoplasm. It carries out the reaction acetate + ATP = acetyl phosphate + ADP. The protein operates within metabolic intermediate biosynthesis; acetyl-CoA biosynthesis; acetyl-CoA from acetate: step 1/2. Its function is as follows. Catalyzes the formation of acetyl phosphate from acetate and ATP. Can also catalyze the reverse reaction. This chain is Acetate kinase, found in Campylobacter jejuni subsp. doylei (strain ATCC BAA-1458 / RM4099 / 269.97).